A 522-amino-acid chain; its full sequence is Endochitinase 11 (522 aa).

An N-terminal signal peptide occupies residues 1 to 24 (MLFSMVMFTERWWVGSKDCPRVPA). N148 and N275 each carry an N-linked (GlcNAc...) asparagine glycan. The GH18 domain maps to 235 to 522 (KHVYAPYVDF…ALTCLRNSTA (288 aa)). E346 (proton donor) is an active-site residue. Residues N455 and N519 are each glycosylated (N-linked (GlcNAc...) asparagine).

Belongs to the glycosyl hydrolase 18 family. Chitinase class V subfamily.

The protein resides in the secreted. The catalysed reaction is Random endo-hydrolysis of N-acetyl-beta-D-glucosaminide (1-&gt;4)-beta-linkages in chitin and chitodextrins.. In terms of biological role, secreted chitinase involved in the degradation of chitin, a component of the cell walls of fungi and exoskeletal elements of some animals (including worms and arthropods). Participates in the infection process and directly acts in the penetration process of the host cuticle. This Metarhizium anisopliae (Entomophthora anisopliae) protein is Endochitinase 11 (chi11).